Consider the following 1429-residue polypeptide: uncharacterized protein (1429 aa).

Disordered regions lie at residues 1–76 (MEGE…SGIE) and 103–130 (PAGA…AGEK). Positions 14–29 (SHSTSVVSERASSSGV) are enriched in low complexity. Residues 109–121 (SAQNANLISSKSE) show a composition bias toward polar residues. 2 helical membrane passes run 197 to 217 (LTGQ…LSWI) and 225 to 245 (FFIL…CMIS). Residues 266–471 (DYETMSWFNT…WPNMFDYDLS (206 aa)) enclose the SMP-LTD domain. C2 domains are found at residues 462–584 (WPNM…GDIY) and 738–858 (TPVD…DRSA). Residues 899–932 (NTDNSSKQSSENVQSATDPTTPAKDNSTSNAETS) are disordered. The region spanning 1060 to 1177 (TYMPVPMTLN…EPNVESQQSI (118 aa)) is the C2 3 domain. A disordered region spans residues 1280–1303 (EKNPSRSDLTTTQEASSSASVPPA). A compositionally biased stretch (low complexity) spans 1294-1303 (ASSSASVPPA).

Its subcellular location is the membrane. This is an uncharacterized protein from Schizosaccharomyces pombe (strain 972 / ATCC 24843) (Fission yeast).